The sequence spans 188 residues: MKRSTRKQQGFTLLEMMLVVLLAGIAAGMVVMAFPPERQNDSAWQLARFQAQLEFAAESSQVNEYMLGVRIYPDRWQFYQLQRPAASERIPIPSGDRWQGYKWQPWQPHRVSASATLPEALRLELLQADGKKVDKTQSGDDPDILILPGGEITPFRLLVKSENKALSNWLQVDNTGRFVTSMSQGKKR.

A propeptide spans 1-10 (leader sequence); it reads MKRSTRKQQG. At Phe11 the chain carries N-methylphenylalanine. A helical membrane pass occupies residues 13 to 35; sequence LLEMMLVVLLAGIAAGMVVMAFP.

This sequence belongs to the GSP H family. As to quaternary structure, type II secretion is composed of four main components: the outer membrane complex, the inner membrane complex, the cytoplasmic secretion ATPase and the periplasm-spanning pseudopilus. Interacts with core component OutG. In terms of processing, cleaved by prepilin peptidase. Post-translationally, methylated by prepilin peptidase at the amino group of the N-terminal phenylalanine once the leader sequence is cleaved by prepilin peptidase.

The protein localises to the cell inner membrane. Its function is as follows. Component of the type II secretion system required for the energy-dependent secretion of extracellular factors such as proteases and toxins from the periplasm. Part of the pseudopilus tip complex that is critical for the recognition and binding of secretion substrates. This is Type II secretion system protein H (outH) from Pectobacterium carotovorum subsp. carotovorum (Erwinia carotovora subsp. carotovora).